The following is a 222-amino-acid chain: Large ribosomal subunit protein uL4 (222 aa).

This sequence belongs to the universal ribosomal protein uL4 family. Part of the 50S ribosomal subunit.

One of the primary rRNA binding proteins, this protein initially binds near the 5'-end of the 23S rRNA. It is important during the early stages of 50S assembly. It makes multiple contacts with different domains of the 23S rRNA in the assembled 50S subunit and ribosome. Functionally, forms part of the polypeptide exit tunnel. In Acidobacterium capsulatum (strain ATCC 51196 / DSM 11244 / BCRC 80197 / JCM 7670 / NBRC 15755 / NCIMB 13165 / 161), this protein is Large ribosomal subunit protein uL4.